Reading from the N-terminus, the 129-residue chain is Small ribosomal subunit protein uS11 (129 aa).

The protein belongs to the universal ribosomal protein uS11 family. Part of the 30S ribosomal subunit. Interacts with proteins S7 and S18. Binds to IF-3.

Its function is as follows. Located on the platform of the 30S subunit, it bridges several disparate RNA helices of the 16S rRNA. Forms part of the Shine-Dalgarno cleft in the 70S ribosome. This chain is Small ribosomal subunit protein uS11, found in Psychromonas ingrahamii (strain DSM 17664 / CCUG 51855 / 37).